The following is a 614-amino-acid chain: Acetylcholinesterase (614 aa).

An N-terminal signal peptide occupies residues 1-31 (MRPPWYPLHTPSLAFPLLFLLLSLLGGGARA). A disulfide bridge connects residues cysteine 100 and cysteine 127. The active-site Acyl-ester intermediate is the serine 234. Cysteine 288 and cysteine 303 are oxidised to a cystine. N-linked (GlcNAc...) asparagine glycosylation is present at asparagine 296. Glutamate 365 serves as the catalytic Charge relay system. Asparagine 381 carries N-linked (GlcNAc...) asparagine glycosylation. An intrachain disulfide couples cysteine 440 to cysteine 560. Histidine 478 serves as the catalytic Charge relay system. Residue asparagine 495 is glycosylated (N-linked (GlcNAc...) asparagine).

The protein belongs to the type-B carboxylesterase/lipase family. As to quaternary structure, isoform H generates GPI-anchored dimers; disulfide linked. Isoform T generates multiple structures, ranging from monomers and dimers to collagen-tailed and hydrophobic-tailed forms, in which catalytic tetramers are associated with anchoring proteins that attach them to the basal lamina or to cell membranes. In the collagen-tailed forms, isoform T subunits are associated with a specific collagen, COLQ, which triggers the formation of isoform T tetramers, from monomers and dimers. Interacts with PRIMA1. The interaction with PRIMA1 is required to anchor it to the basal lamina of cells and organize into tetramers. In terms of tissue distribution, predominates in most expressing tissues except erythrocytes where a glycophospholipid-attached form of ACHE predominates.

It is found in the synapse. Its subcellular location is the secreted. The protein resides in the cell membrane. The enzyme catalyses acetylcholine + H2O = choline + acetate + H(+). Functionally, terminates signal transduction at the neuromuscular junction by rapid hydrolysis of the acetylcholine released into the synaptic cleft. This Mus musculus (Mouse) protein is Acetylcholinesterase (Ache).